The chain runs to 182 residues: WUSCHEL-related homeobox 5 (182 aa).

Residues 1 to 24 form a disordered region; it reads MSFSVKGRSLRGNNNGGTGTKCGR. Positions 20 to 84 form a DNA-binding region, homeobox; WUS-type; sequence TKCGRWNPTV…NHKARERQKR (65 aa).

It belongs to the WUS homeobox family. Specifically expressed in the central cells of a quiescent center (QC) of the root.

The protein resides in the nucleus. In terms of biological role, transcription factor, which may be involved in the specification and maintenance of the stem cells (QC cells) in the root apical meristem (RAM). This is WUSCHEL-related homeobox 5 (WOX5) from Arabidopsis thaliana (Mouse-ear cress).